The primary structure comprises 291 residues: Ribosomal large subunit pseudouridine synthase B (291 aa).

One can recognise an S4 RNA-binding domain in the interval 3-63 (EKLQKVLARA…GHLISVKESA (61 aa)). Catalysis depends on aspartate 110, which acts as the Nucleophile. Residues 272 to 291 (VKRHSQIAGGRRSGGRNNNG) form a disordered region.

It belongs to the pseudouridine synthase RsuA family.

It carries out the reaction uridine(2605) in 23S rRNA = pseudouridine(2605) in 23S rRNA. Its function is as follows. Responsible for synthesis of pseudouridine from uracil-2605 in 23S ribosomal RNA. This is Ribosomal large subunit pseudouridine synthase B (rluB) from Salmonella typhi.